Consider the following 406-residue polypeptide: 3-phosphoshikimate 1-carboxyvinyltransferase (406 aa).

The 3-phosphoshikimate site is built by lysine 20, serine 21, and arginine 25. Residue lysine 20 coordinates phosphoenolpyruvate. Phosphoenolpyruvate contacts are provided by glycine 84 and arginine 112. The 3-phosphoshikimate site is built by serine 155, serine 156, glutamine 157, aspartate 295, glutamine 317, and lysine 321. Phosphoenolpyruvate is bound at residue glutamine 157. Aspartate 295 acts as the Proton acceptor in catalysis. Arginine 325, arginine 366, and lysine 392 together coordinate phosphoenolpyruvate.

It belongs to the EPSP synthase family. In terms of assembly, monomer.

It localises to the cytoplasm. It carries out the reaction 3-phosphoshikimate + phosphoenolpyruvate = 5-O-(1-carboxyvinyl)-3-phosphoshikimate + phosphate. The protein operates within metabolic intermediate biosynthesis; chorismate biosynthesis. In terms of biological role, catalyzes the transfer of the enolpyruvyl moiety of phosphoenolpyruvate (PEP) to the 5-hydroxyl of shikimate-3-phosphate (S3P) to produce enolpyruvyl shikimate-3-phosphate and inorganic phosphate. This chain is 3-phosphoshikimate 1-carboxyvinyltransferase, found in Pyrococcus furiosus (strain ATCC 43587 / DSM 3638 / JCM 8422 / Vc1).